A 143-amino-acid polypeptide reads, in one-letter code: MAKKIIGYIKLQVPAGKANPSPPIGPALGQRGLNIMEFCKAFNAQTQGVEPGLPIPVVITAFADKSFTFVMKTPPATILIKKAAGIKSGSAKPHTDKVGKITRAQCEEIAKTKSPDLTAADMEAAIRTIAGSARSMGITVEGL.

Belongs to the universal ribosomal protein uL11 family. Part of the ribosomal stalk of the 50S ribosomal subunit. Interacts with L10 and the large rRNA to form the base of the stalk. L10 forms an elongated spine to which L12 dimers bind in a sequential fashion forming a multimeric L10(L12)X complex. In terms of processing, one or more lysine residues are methylated.

Forms part of the ribosomal stalk which helps the ribosome interact with GTP-bound translation factors. This chain is Large ribosomal subunit protein uL11, found in Dechloromonas aromatica (strain RCB).